We begin with the raw amino-acid sequence, 427 residues long: Serine--tRNA ligase (427 aa).

235–237 is a binding site for L-serine; that stretch reads TAE. Residues 266 to 268 and valine 282 each bind ATP; that span reads RRE. Glutamate 289 is an L-serine binding site. 353 to 356 contacts ATP; it reads EASS. Serine 389 serves as a coordination point for L-serine.

The protein belongs to the class-II aminoacyl-tRNA synthetase family. Type-1 seryl-tRNA synthetase subfamily. In terms of assembly, homodimer. The tRNA molecule binds across the dimer.

Its subcellular location is the cytoplasm. The catalysed reaction is tRNA(Ser) + L-serine + ATP = L-seryl-tRNA(Ser) + AMP + diphosphate + H(+). The enzyme catalyses tRNA(Sec) + L-serine + ATP = L-seryl-tRNA(Sec) + AMP + diphosphate + H(+). The protein operates within aminoacyl-tRNA biosynthesis; selenocysteinyl-tRNA(Sec) biosynthesis; L-seryl-tRNA(Sec) from L-serine and tRNA(Sec): step 1/1. Catalyzes the attachment of serine to tRNA(Ser). Is also able to aminoacylate tRNA(Sec) with serine, to form the misacylated tRNA L-seryl-tRNA(Sec), which will be further converted into selenocysteinyl-tRNA(Sec). This chain is Serine--tRNA ligase, found in Chlorobium phaeobacteroides (strain BS1).